Here is a 242-residue protein sequence, read N- to C-terminus: Glycerol-3-phosphate acyltransferase (242 aa).

The next 6 helical transmembrane spans lie at 7–27 (ISLLVILSLLIGYLFGSIMFA), 61–81 (IAIGFFEIIKSVIPFSIILLI), 102–122 (YYLTYLAPLAAIFGHMYPVYF), 135–155 (GFVFVVSPWWFLIIALTWWTI), 162–182 (VSLASIVCFIIFLFLPYIPWL), and 201–221 (DWYIIVFFAIANTILSTIIIW).

The protein belongs to the PlsY family. As to quaternary structure, probably interacts with PlsX.

The protein resides in the cell membrane. It catalyses the reaction an acyl phosphate + sn-glycerol 3-phosphate = a 1-acyl-sn-glycero-3-phosphate + phosphate. It participates in lipid metabolism; phospholipid metabolism. In terms of biological role, catalyzes the transfer of an acyl group from acyl-phosphate (acyl-PO(4)) to glycerol-3-phosphate (G3P) to form lysophosphatidic acid (LPA). This enzyme utilizes acyl-phosphate as fatty acyl donor, but not acyl-CoA or acyl-ACP. This Mycoplasmoides gallisepticum (strain R(low / passage 15 / clone 2)) (Mycoplasma gallisepticum) protein is Glycerol-3-phosphate acyltransferase.